The chain runs to 613 residues: Dihydroxy-acid dehydratase (613 aa).

Asp81 contacts Mg(2+). Residue Cys122 participates in [2Fe-2S] cluster binding. Residues Asp123 and Lys124 each contribute to the Mg(2+) site. Position 124 is an N6-carboxylysine (Lys124). Cys195 is a binding site for [2Fe-2S] cluster. Glu491 is a binding site for Mg(2+). Catalysis depends on Ser517, which acts as the Proton acceptor.

The protein belongs to the IlvD/Edd family. As to quaternary structure, homodimer. [2Fe-2S] cluster is required as a cofactor. The cofactor is Mg(2+).

The enzyme catalyses (2R)-2,3-dihydroxy-3-methylbutanoate = 3-methyl-2-oxobutanoate + H2O. It catalyses the reaction (2R,3R)-2,3-dihydroxy-3-methylpentanoate = (S)-3-methyl-2-oxopentanoate + H2O. It functions in the pathway amino-acid biosynthesis; L-isoleucine biosynthesis; L-isoleucine from 2-oxobutanoate: step 3/4. It participates in amino-acid biosynthesis; L-valine biosynthesis; L-valine from pyruvate: step 3/4. In terms of biological role, functions in the biosynthesis of branched-chain amino acids. Catalyzes the dehydration of (2R,3R)-2,3-dihydroxy-3-methylpentanoate (2,3-dihydroxy-3-methylvalerate) into 2-oxo-3-methylpentanoate (2-oxo-3-methylvalerate) and of (2R)-2,3-dihydroxy-3-methylbutanoate (2,3-dihydroxyisovalerate) into 2-oxo-3-methylbutanoate (2-oxoisovalerate), the penultimate precursor to L-isoleucine and L-valine, respectively. This chain is Dihydroxy-acid dehydratase, found in Vibrio vulnificus (strain CMCP6).